The sequence spans 1101 residues: Isoleucine--tRNA ligase (1101 aa).

A 'HIGH' region motif is present at residues 50-60 (PFANGLPHYGH). The 'KMSKS' region motif lies at 629 to 633 (KLSKR). Position 632 (Lys-632) interacts with ATP.

Belongs to the class-I aminoacyl-tRNA synthetase family. IleS type 2 subfamily. Monomer. It depends on Zn(2+) as a cofactor.

The protein resides in the cytoplasm. It carries out the reaction tRNA(Ile) + L-isoleucine + ATP = L-isoleucyl-tRNA(Ile) + AMP + diphosphate. Its function is as follows. Catalyzes the attachment of isoleucine to tRNA(Ile). As IleRS can inadvertently accommodate and process structurally similar amino acids such as valine, to avoid such errors it has two additional distinct tRNA(Ile)-dependent editing activities. One activity is designated as 'pretransfer' editing and involves the hydrolysis of activated Val-AMP. The other activity is designated 'posttransfer' editing and involves deacylation of mischarged Val-tRNA(Ile). The polypeptide is Isoleucine--tRNA ligase (Anaplasma marginale (strain St. Maries)).